A 185-amino-acid chain; its full sequence is MASTQAMGMTEQQKKSVDEMVEKATNMGVNVQAQNSAVVSMINQTNVSMTFNENHNWSGSVVGTGYPKSIPTKQSRQFIHQGDAKDGSQGAVVYYGSNANGEPCGWLLAWCAPTNVTPTKPNRVYVDCGAQSKFDTISWDTIKAKLDVGPATTNFTDVDTETTIAAGVTSTGSFASVGAAFGLST.

Belongs to the jasmonate-induced protein family.

The sequence is that of Jasmonate-induced protein homolog from Atriplex canescens (Fourwing saltbush).